The primary structure comprises 378 residues: Acid phosphatase-like protein XcAP-2 (378 aa).

A signal peptide spans 1-19 (MKTTILLLVVLTIVQLSKA). 3 cysteine pairs are disulfide-bonded: C147–C374, C168–C220, and C347–C351.

This sequence belongs to the histidine acid phosphatase family.

The protein localises to the secreted. Probably modulates blood feeding of fleas on vertebrate species by binding and sequestering different mediators involved in the host response. Binds histamine. Binds leukotriene B4, leukotriene C4, leukotriene D4 and leukotriene E4. Does not bind serotonin, adrenaline, noradrenaline, ADP, and stable analogs of thromboxane A2: U-46619 and cTXA2. The polypeptide is Acid phosphatase-like protein XcAP-2 (Xenopsylla cheopis (Oriental rat flea)).